Here is a 431-residue protein sequence, read N- to C-terminus: Adenylosuccinate synthetase (431 aa).

GTP is bound by residues 12–18 (GDEGKGK) and 40–42 (GHT). Asp-13 serves as the catalytic Proton acceptor. The Mg(2+) site is built by Asp-13 and Gly-40. Residues 13-16 (DEGK), 38-41 (NAGH), Thr-129, Arg-143, Gln-224, Thr-239, and Arg-303 each bind IMP. Catalysis depends on His-41, which acts as the Proton donor. Substrate is bound at residue 299–305 (VTTGRAR). Residues Arg-305, 331–333 (KLD), and 413–415 (GVG) each bind GTP.

Belongs to the adenylosuccinate synthetase family. Homodimer. It depends on Mg(2+) as a cofactor.

It localises to the cytoplasm. It catalyses the reaction IMP + L-aspartate + GTP = N(6)-(1,2-dicarboxyethyl)-AMP + GDP + phosphate + 2 H(+). Its pathway is purine metabolism; AMP biosynthesis via de novo pathway; AMP from IMP: step 1/2. Functionally, plays an important role in the de novo pathway of purine nucleotide biosynthesis. Catalyzes the first committed step in the biosynthesis of AMP from IMP. The polypeptide is Adenylosuccinate synthetase (Mycobacterium sp. (strain KMS)).